A 248-amino-acid chain; its full sequence is ATP synthase subunit a, chloroplastic (248 aa).

The next 4 helical transmembrane spans lie at 34 to 54, 95 to 115, 134 to 154, and 203 to 223; these read LHGQ…IFAL, VPYI…GALI, INVT…AGIS, and VFAL…GLFA.

This sequence belongs to the ATPase A chain family. As to quaternary structure, F-type ATPases have 2 components, CF(1) - the catalytic core - and CF(0) - the membrane proton channel. CF(1) has five subunits: alpha(3), beta(3), gamma(1), delta(1), epsilon(1). CF(0) has four main subunits: a, b, b' and c.

Its subcellular location is the plastid. The protein resides in the chloroplast thylakoid membrane. Functionally, key component of the proton channel; it plays a direct role in the translocation of protons across the membrane. This is ATP synthase subunit a, chloroplastic from Guillardia theta (Cryptophyte).